The sequence spans 203 residues: B-cell CLL/lymphoma 7 protein family member B-A (203 aa).

Disordered regions lie at residues 55-80 (KEKE…ESSD) and 94-148 (SNQS…EIME). A compositionally biased stretch (low complexity) spans 109-129 (ADSSNNSSPPASEPVSPAPQS).

The protein belongs to the BCL7 family.

The protein is B-cell CLL/lymphoma 7 protein family member B-A (bcl7ba) of Danio rerio (Zebrafish).